The sequence spans 343 residues: Phenylalanine--tRNA ligase alpha subunit (343 aa).

E268 serves as a coordination point for Mg(2+).

It belongs to the class-II aminoacyl-tRNA synthetase family. Phe-tRNA synthetase alpha subunit type 1 subfamily. As to quaternary structure, tetramer of two alpha and two beta subunits. Requires Mg(2+) as cofactor.

Its subcellular location is the cytoplasm. The enzyme catalyses tRNA(Phe) + L-phenylalanine + ATP = L-phenylalanyl-tRNA(Phe) + AMP + diphosphate + H(+). This chain is Phenylalanine--tRNA ligase alpha subunit, found in Cupriavidus taiwanensis (strain DSM 17343 / BCRC 17206 / CCUG 44338 / CIP 107171 / LMG 19424 / R1) (Ralstonia taiwanensis (strain LMG 19424)).